The primary structure comprises 226 residues: Cytidylate kinase (226 aa).

Residue 12 to 20 (GPSGAGKGT) coordinates ATP.

This sequence belongs to the cytidylate kinase family. Type 1 subfamily.

It localises to the cytoplasm. It catalyses the reaction CMP + ATP = CDP + ADP. The enzyme catalyses dCMP + ATP = dCDP + ADP. In Xanthomonas campestris pv. campestris (strain 8004), this protein is Cytidylate kinase.